A 122-amino-acid chain; its full sequence is Large ribosomal subunit protein bL12 (122 aa).

The protein belongs to the bacterial ribosomal protein bL12 family. In terms of assembly, homodimer. Part of the ribosomal stalk of the 50S ribosomal subunit. Forms a multimeric L10(L12)X complex, where L10 forms an elongated spine to which 2 to 4 L12 dimers bind in a sequential fashion. Binds GTP-bound translation factors.

Functionally, forms part of the ribosomal stalk which helps the ribosome interact with GTP-bound translation factors. Is thus essential for accurate translation. The sequence is that of Large ribosomal subunit protein bL12 from Staphylococcus aureus (strain Mu50 / ATCC 700699).